Consider the following 307-residue polypeptide: Protoheme IX farnesyltransferase (307 aa).

A run of 8 helical transmembrane segments spans residues 32-52, 65-85, 108-128, 131-151, 158-178, 186-206, 251-271, and 287-307; these read MGIV…ALHF, FFTI…NNYI, PGFA…FLLL, PMAV…YSLW, LNTV…WAAI, IAWM…LALA, LGIT…VLGF, and FVYS…VTFF.

Belongs to the UbiA prenyltransferase family. Protoheme IX farnesyltransferase subfamily. Interacts with CtaA.

It is found in the cell membrane. The catalysed reaction is heme b + (2E,6E)-farnesyl diphosphate + H2O = Fe(II)-heme o + diphosphate. It participates in porphyrin-containing compound metabolism; heme O biosynthesis; heme O from protoheme: step 1/1. In terms of biological role, converts heme B (protoheme IX) to heme O by substitution of the vinyl group on carbon 2 of heme B porphyrin ring with a hydroxyethyl farnesyl side group. The polypeptide is Protoheme IX farnesyltransferase (Bacillus cereus (strain G9842)).